We begin with the raw amino-acid sequence, 175 residues long: Large ribosomal subunit protein uL10 (175 aa).

Belongs to the universal ribosomal protein uL10 family. Part of the ribosomal stalk of the 50S ribosomal subunit. The N-terminus interacts with L11 and the large rRNA to form the base of the stalk. The C-terminus forms an elongated spine to which L12 dimers bind in a sequential fashion forming a multimeric L10(L12)X complex.

In terms of biological role, forms part of the ribosomal stalk, playing a central role in the interaction of the ribosome with GTP-bound translation factors. This Picosynechococcus sp. (strain ATCC 27264 / PCC 7002 / PR-6) (Agmenellum quadruplicatum) protein is Large ribosomal subunit protein uL10.